Consider the following 39-residue polypeptide: uncharacterized protein (39 aa).

This is an uncharacterized protein from Dictyostelium discoideum (Social amoeba).